A 113-amino-acid polypeptide reads, in one-letter code: Ribonuclease P protein component (113 aa).

The protein belongs to the RnpA family. Consists of a catalytic RNA component (M1 or rnpB) and a protein subunit.

The catalysed reaction is Endonucleolytic cleavage of RNA, removing 5'-extranucleotides from tRNA precursor.. Functionally, RNaseP catalyzes the removal of the 5'-leader sequence from pre-tRNA to produce the mature 5'-terminus. It can also cleave other RNA substrates such as 4.5S RNA. The protein component plays an auxiliary but essential role in vivo by binding to the 5'-leader sequence and broadening the substrate specificity of the ribozyme. This is Ribonuclease P protein component from Geotalea uraniireducens (strain Rf4) (Geobacter uraniireducens).